The chain runs to 488 residues: MDQSVQERTRIKNERYESGVIPYAKMGYWDPDYAIKATDVLALFRVTPQPGVDPVEAAAAIAGESSTATWTVVWTDLLTACDLYRAKAYRVDPVPSSPDQYFAYIAYDIDLFEEGSIANLTASIIGNVFGFKAVKALRLEDMRIPVAYLKTFQGPATGVVVERERMNNFGRPLLGATVKPKLGLSGKNYGRVVYEGLKGGLDFLKDDENINSQPFMRWRERFLFCMEGVNRASASSGEVKGHYLNVTAATMEDMYERAEFSKEVGSIICMIDLVIGYTAIQSMAKWARKNDMILHLHRAGNSTYSRQKNHGMNFRVICKWMRMAGVDHIHAGTVVGKLEGDPLMIKGFYNTLLEPHLNINLPEGLFFEQNWASLRKVMPVASGGIHCGQMHQLIDYLGDDVVLQFGGGTIGHPDGIQAGATANRVALESMLLARNEGRDYVAQGPQILRDAAKTCGPLQTALDLWKDISFNYTSTDTADFVQTPTANV.

Substrate contacts are provided by asparagine 127 and threonine 177. The active-site Proton acceptor is lysine 179. Position 181 (lysine 181) interacts with substrate. Residues lysine 205, aspartate 207, and glutamate 208 each contribute to the Mg(2+) site. An N6-carboxylysine modification is found at lysine 205. The active-site Proton acceptor is the histidine 297. Substrate-binding residues include arginine 298, histidine 330, and serine 382.

This sequence belongs to the RuBisCO large chain family. Type I subfamily. As to quaternary structure, heterohexadecamer of 8 large chains and 8 small chains. Mg(2+) serves as cofactor.

The protein localises to the plastid. Its subcellular location is the chloroplast. It carries out the reaction 2 (2R)-3-phosphoglycerate + 2 H(+) = D-ribulose 1,5-bisphosphate + CO2 + H2O. The enzyme catalyses D-ribulose 1,5-bisphosphate + O2 = 2-phosphoglycolate + (2R)-3-phosphoglycerate + 2 H(+). RuBisCO catalyzes two reactions: the carboxylation of D-ribulose 1,5-bisphosphate, the primary event in carbon dioxide fixation, as well as the oxidative fragmentation of the pentose substrate in the photorespiration process. Both reactions occur simultaneously and in competition at the same active site. The protein is Ribulose bisphosphate carboxylase large chain of Porphyridium aerugineum (Red microalga).